The sequence spans 193 residues: Dirigent protein (193 aa).

The first 29 residues, 1–29 (MGGEKAFSFIFLLFLCFFLANLSASSAHP), serve as a signal peptide directing secretion. A disulfide bridge links Cys40 with Cys192. 2 N-linked (GlcNAc...) asparagine glycosylation sites follow: Asn59 and Asn129.

Belongs to the plant dirigent protein family. As to quaternary structure, homodimer. Expressed in rhizomes, stems, and leaves.

It is found in the secreted. Its subcellular location is the extracellular space. The protein resides in the apoplast. Its pathway is aromatic compound metabolism; phenylpropanoid biosynthesis. Dirigent proteins impart stereoselectivity on the phenoxy radical-coupling reaction, yielding optically active lignans from two molecules of coniferyl alcohol in the biosynthesis of lignans, flavonolignans, and alkaloids and thus plays a central role in plant secondary metabolism. Also involved in the biosynthesis of etoposide, a chemotherapeutic compound of the topoisomerase inhibitor family. In Sinopodophyllum hexandrum (Himalayan may apple), this protein is Dirigent protein.